Consider the following 233-residue polypeptide: Phosphoribosylformylglycinamidine synthase subunit PurQ (233 aa).

The Glutamine amidotransferase type-1 domain occupies 3–233; it reads SAVLVFPGIN…GLAQHLAKAA (231 aa). Residue Cys87 is the Nucleophile of the active site. Catalysis depends on residues His204 and Glu206.

Part of the FGAM synthase complex composed of 1 PurL, 1 PurQ and 2 PurS subunits.

Its subcellular location is the cytoplasm. It carries out the reaction N(2)-formyl-N(1)-(5-phospho-beta-D-ribosyl)glycinamide + L-glutamine + ATP + H2O = 2-formamido-N(1)-(5-O-phospho-beta-D-ribosyl)acetamidine + L-glutamate + ADP + phosphate + H(+). It catalyses the reaction L-glutamine + H2O = L-glutamate + NH4(+). The protein operates within purine metabolism; IMP biosynthesis via de novo pathway; 5-amino-1-(5-phospho-D-ribosyl)imidazole from N(2)-formyl-N(1)-(5-phospho-D-ribosyl)glycinamide: step 1/2. Its function is as follows. Part of the phosphoribosylformylglycinamidine synthase complex involved in the purines biosynthetic pathway. Catalyzes the ATP-dependent conversion of formylglycinamide ribonucleotide (FGAR) and glutamine to yield formylglycinamidine ribonucleotide (FGAM) and glutamate. The FGAM synthase complex is composed of three subunits. PurQ produces an ammonia molecule by converting glutamine to glutamate. PurL transfers the ammonia molecule to FGAR to form FGAM in an ATP-dependent manner. PurS interacts with PurQ and PurL and is thought to assist in the transfer of the ammonia molecule from PurQ to PurL. The polypeptide is Phosphoribosylformylglycinamidine synthase subunit PurQ (Rhodopseudomonas palustris (strain ATCC BAA-98 / CGA009)).